Reading from the N-terminus, the 495-residue chain is Cytoplasmic alpha-amylase (495 aa).

Residues asparagine 104 and aspartate 198 each coordinate Ca(2+). Aspartate 235 (nucleophile) is an active-site residue. Position 239 (histidine 239) interacts with Ca(2+). Glutamate 265 acts as the Proton donor in catalysis.

Belongs to the glycosyl hydrolase 13 family. As to quaternary structure, monomer. Ca(2+) serves as cofactor.

The protein resides in the cytoplasm. The enzyme catalyses Endohydrolysis of (1-&gt;4)-alpha-D-glucosidic linkages in polysaccharides containing three or more (1-&gt;4)-alpha-linked D-glucose units.. The protein is Cytoplasmic alpha-amylase (amyA) of Escherichia coli (strain K12).